Reading from the N-terminus, the 353-residue chain is UPF0283 membrane protein YcjF (353 aa).

Over residues 1-19 the composition is skewed to basic and acidic residues; the sequence is MSEPLKPRIDFAEPLKEEP. Residues 1–35 form a disordered region; that stretch reads MSEPLKPRIDFAEPLKEEPTSAFKAQQTFSEAESR. 3 helical membrane passes run 70-90, 100-120, and 213-233; these read MVMGGLALFGASVVGQGVQWT, VALGGCAAGALIVGAGVGSVV, and ESTLMIAVSPLALVDMAFIAW.

It belongs to the UPF0283 family.

Its subcellular location is the cell inner membrane. This Salmonella paratyphi A (strain AKU_12601) protein is UPF0283 membrane protein YcjF.